The primary structure comprises 209 residues: Ribonuclease HII (209 aa).

Positions 5–202 (SMTLGIDEAG…KNRILNPKLL (198 aa)) constitute an RNase H type-2 domain. A divalent metal cation contacts are provided by Asp-11, Glu-12, and Asp-108.

It belongs to the RNase HII family. Mn(2+) is required as a cofactor. Requires Mg(2+) as cofactor.

The protein localises to the cytoplasm. It catalyses the reaction Endonucleolytic cleavage to 5'-phosphomonoester.. In terms of biological role, endonuclease that specifically degrades the RNA of RNA-DNA hybrids. This is Ribonuclease HII (rnhB) from Helicobacter pylori (strain J99 / ATCC 700824) (Campylobacter pylori J99).